Here is a 769-residue protein sequence, read N- to C-terminus: Calcium up-regulated protein B (769 aa).

The disordered stretch occupies residues 1-22 (MINIEDISKSSNQSEEKQLKST). Ricin B-type lectin domains follow at residues 25–145 (KPKY…WTTF) and 158–296 (FQSK…WITN).

This sequence belongs to the cup family.

It localises to the cytoplasm. Its subcellular location is the membrane. Functionally, may play an important role in stabilizing and/or regulating the cell membrane during Ca(2+) stress or certain stages of development. The polypeptide is Calcium up-regulated protein B (cupB) (Dictyostelium discoideum (Social amoeba)).